We begin with the raw amino-acid sequence, 450 residues long: MYTFEVFDSRTRSIVKLEDCLLRLYVCGITPYKSTHLGHAFTYVGFDTLFRLALDSGRDVLYIQNISDIDEPLFQYAEKVGIHYKDLARTQTKRFFEDMHTLECLPPGYVIPVSKVLDGIKTGIEGLISRNMAYKLPNGDVYFDSTLTDPGKMFCFDRKTAMSLMLETDTGKNPFDPLLWRGRGAEPQWEASFGAGRPAWHISCAVLSNLQTQYENVLHIYGGGRDLAFPHHEFTNVLSKLIRAPKDNKQQDTVQDVFMHTGLVSYMGDKMSKSKGNLVFISQLREQCEKIGLHHSVIRLALLQRHYREDWEWQDECLDRAASRFRLWKSALQEYIGAKGIRSTADQNKGTQGAWERIHGGVFDSNFDHRQPIHPKHSPQMRDYSEHGSAGQNGTDLDLSLYQAIRFHLCNDLDTPKALDAVDSYARKGTITIPEARAVEKLLGIPLTRV.

The 'HIGH' region signature appears at 29 to 39; it reads ITPYKSTHLGH. Residues 270–274 carry the 'KMSKS' region motif; the sequence is KMSKS. K273 is a binding site for ATP. The interval 372–392 is disordered; that stretch reads PIHPKHSPQMRDYSEHGSAGQ.

It belongs to the class-I aminoacyl-tRNA synthetase family. Monomer.

The protein resides in the cytoplasm. The catalysed reaction is tRNA(Cys) + L-cysteine + ATP = L-cysteinyl-tRNA(Cys) + AMP + diphosphate. In Tropheryma whipplei (strain TW08/27) (Whipple's bacillus), this protein is Putative cysteine--tRNA ligase 2 (cysS2).